The chain runs to 344 residues: MQSITFTRPDDWHLHVRDGAALAAVVPHTAERFGRALIMPNLRPPVTTTAQALAYRDRIRAAVPAGLAFEPLMSLYLTDNTAPDEIERARASGAVIAAKLYPAGATTNSDAGVTAIDKIYPVLERMEACGLVLCVHGEVTGGEVDVFDRERVFMEKILSPLVRRFPALKVVFEHITTAEAAQFVRAAGANVAATVTAHHLLLNRNAIFAGGIRPHHYCLPVLKRETHRVALVEAVTSGNPRFFLGTDSAPHARSTKEAACGCAGCYTAHAGIELYAEVFDAAGALERLEAFASLNGPAFYGLAPNADKITLVRESWSVPAGFPYLDDDPLVPLRAGESVGWRLA.

2 residues coordinate Zn(2+): H13 and H15. Substrate is bound by residues 15 to 17 (HVR) and N41. Zn(2+)-binding residues include K99, H136, and H174. Position 99 is an N6-carboxylysine (K99). Substrate is bound at residue H136. L219 lines the substrate pocket. A Zn(2+)-binding site is contributed by D247. D247 is a catalytic residue. The substrate site is built by H251 and A263.

This sequence belongs to the metallo-dependent hydrolases superfamily. DHOase family. Class II DHOase subfamily. In terms of assembly, homodimer. Requires Zn(2+) as cofactor.

The enzyme catalyses (S)-dihydroorotate + H2O = N-carbamoyl-L-aspartate + H(+). Its pathway is pyrimidine metabolism; UMP biosynthesis via de novo pathway; (S)-dihydroorotate from bicarbonate: step 3/3. Functionally, catalyzes the reversible cyclization of carbamoyl aspartate to dihydroorotate. In Azoarcus sp. (strain BH72), this protein is Dihydroorotase.